A 434-amino-acid polypeptide reads, in one-letter code: Origin recognition complex subunit 4 (434 aa).

At K7 the chain carries N6-methyllysine. 65-72 (GPRGSGKT) contacts ATP.

Belongs to the ORC4 family. In terms of assembly, component of ORC, a complex composed of at least 6 subunits: ORC1, ORC2, ORC3, ORC4, ORC5 and ORC6. ORC is regulated in a cell-cycle dependent manner. It is sequentially assembled at the exit from anaphase of mitosis and disassembled as cells enter S phase. Interacts with DBF4. Interacts with POLQ.

It is found in the nucleus. Component of the origin recognition complex (ORC) that binds origins of replication. DNA-binding is ATP-dependent. The specific DNA sequences that define origins of replication have not been identified yet. ORC is required to assemble the pre-replication complex necessary to initiate DNA replication. Binds histone H3 and H4 trimethylation marks H3K9me3, H3K27me3 and H4K20me3. The sequence is that of Origin recognition complex subunit 4 (Orc4) from Rattus norvegicus (Rat).